The following is a 347-amino-acid chain: Probable ribonucleotide transport ATP-binding protein mkl (347 aa).

The region spanning 16–252 (IEVKGLTKSF…DEPVVRQFLN (237 aa)) is the ABC transporter domain. An ATP-binding site is contributed by 48–55 (GPSGTGKS).

Belongs to the ABC transporter superfamily.

Not known, could be involved in the transport of ribonucleotides. The polypeptide is Probable ribonucleotide transport ATP-binding protein mkl (mkl) (Mycobacterium leprae (strain TN)).